Reading from the N-terminus, the 207-residue chain is dTTP/UTP pyrophosphatase (207 aa).

The active-site Proton acceptor is the Asp87.

This sequence belongs to the Maf family. YhdE subfamily. It depends on a divalent metal cation as a cofactor.

It localises to the cytoplasm. The enzyme catalyses dTTP + H2O = dTMP + diphosphate + H(+). It carries out the reaction UTP + H2O = UMP + diphosphate + H(+). In terms of biological role, nucleoside triphosphate pyrophosphatase that hydrolyzes dTTP and UTP. May have a dual role in cell division arrest and in preventing the incorporation of modified nucleotides into cellular nucleic acids. The polypeptide is dTTP/UTP pyrophosphatase (Nitrosomonas europaea (strain ATCC 19718 / CIP 103999 / KCTC 2705 / NBRC 14298)).